The chain runs to 22 residues: TQLEAACPNVVSCADILALAAR.

It belongs to the peroxidase family. Classical plant (class III) peroxidase subfamily. Heme b is required as a cofactor. Requires Ca(2+) as cofactor.

Its subcellular location is the secreted. The protein resides in the cell wall. It carries out the reaction 2 a phenolic donor + H2O2 = 2 a phenolic radical donor + 2 H2O. Its function is as follows. Removal of H(2)O(2), oxidation of toxic reductants, biosynthesis and degradation of lignin, suberization, auxin catabolism, response to environmental stresses such as wounding, pathogen attack and oxidative stress. These functions might be dependent on each isozyme/isoform in each plant tissue. In Cycas revoluta (Sago palm), this protein is Peroxidase 5.